A 464-amino-acid polypeptide reads, in one-letter code: Chromosomal replication initiator protein DnaA (464 aa).

A domain I, interacts with DnaA modulators region spans residues Met1–Pro82. Positions Pro82–Ser127 are domain II. Residues Ala98–Ser113 are compositionally biased toward low complexity. The interval Ala98–Ala117 is disordered. Positions Asn128 to Ala344 are domain III, AAA+ region. ATP-binding residues include Gly172, Gly174, Lys175, and Thr176. The interval Asn345–Ser464 is domain IV, binds dsDNA.

Belongs to the DnaA family. Oligomerizes as a right-handed, spiral filament on DNA at oriC.

It is found in the cytoplasm. Plays an important role in the initiation and regulation of chromosomal replication. Binds to the origin of replication; it binds specifically double-stranded DNA at a 9 bp consensus (dnaA box): 5'-TTATC[CA]A[CA]A-3'. DnaA binds to ATP and to acidic phospholipids. DnaA can inhibit its own gene expression as well as that of other genes. Functionally, plays an essential role in the initiation and regulation of chromosomal replication. ATP-DnaA binds to the origin of replication (oriC) to initiate formation of the DNA replication initiation complex once per cell cycle. Binds the DnaA box (a 9 base pair repeat at the origin) and separates the double-stranded (ds)DNA. Forms a right-handed helical filament on oriC DNA; dsDNA binds to the exterior of the filament while single-stranded (ss)DNA is stabiized in the filament's interior. The ATP-DnaA-oriC complex binds and stabilizes one strand of the AT-rich DNA unwinding element (DUE), permitting loading of DNA polymerase. After initiation quickly degrades to an ADP-DnaA complex that is not apt for DNA replication. Binds acidic phospholipids. This chain is Chromosomal replication initiator protein DnaA, found in Serratia marcescens.